We begin with the raw amino-acid sequence, 322 residues long: Probable arabinan endo-1,5-alpha-L-arabinosidase A (322 aa).

Positions 1 to 19 (MYLPTLAASASLLVGVAHG) are cleaved as a signal peptide. The Proton acceptor role is filled by aspartate 34. Glutamate 201 serves as the catalytic Proton donor.

This sequence belongs to the glycosyl hydrolase 43 family.

It localises to the secreted. It catalyses the reaction Endohydrolysis of (1-&gt;5)-alpha-arabinofuranosidic linkages in (1-&gt;5)-arabinans.. The protein operates within glycan metabolism; L-arabinan degradation. Endo-1,5-alpha-L-arabinanase involved in degradation of pectin. Its preferred substrate is linear 1,5-alpha-L-arabinan. This is Probable arabinan endo-1,5-alpha-L-arabinosidase A (abnA) from Emericella nidulans (strain FGSC A4 / ATCC 38163 / CBS 112.46 / NRRL 194 / M139) (Aspergillus nidulans).